Here is a 549-residue protein sequence, read N- to C-terminus: MTLASIRRGYHVIKTLLQYGLDDVLPPKMTPWYFKLARNSLFWIRNKHKGKSGGERLKLAMQELGPVYIKLGQMLSTRRDLLSDEWANELAMLQDKVPPFDGALARQAIETELKAPIESFFDDFNETPLASASISQVHTATLKSNGKAVVLKVLRPNVEAKIQADLLLMSQTAKIIDYLLGEGNRLRPSEVIEDYRVTILGELNLKLEALNAIKLRNNFLDSDALYIPYVYEEFCYPRLMVMERIYGIPVSDIAALKAQGTNFKLLAERGVELFFTQVFRDNFFHADMHPGNIFISRDHPENPYYIGLDCGIMGTLSEVDKRYLAENFLAFFNRDYHRIAQLYIESGWVSEKTDLQAFEQAIKVVCEPMFNKPLDEISFGHVLLELFRTARHFDIVVQPQLVLLEKTLLYIEGLGRQLYPQLDLWQTAKPFLEQWMAEQVGPKAMFKKVSTKLPYWSDKLPEFPELIYDNLKLGRKLLSSQQQMLDKYLKYQQQAHKSNYLLITSAILLICGTLLFNQDATLWSPYVCLISGAALWIIGWRSRPKNRKF.

A Protein kinase domain is found at 123–501 (DFNETPLASA…QQQAHKSNYL (379 aa)). ATP-binding positions include 129–137 (LASASISQV) and lysine 152. Catalysis depends on aspartate 287, which acts as the Proton acceptor. 2 helical membrane passes run 498-518 (SNYL…LFNQ) and 520-540 (ATLW…IIGW).

It belongs to the ABC1 family. UbiB subfamily.

It localises to the cell inner membrane. The protein operates within cofactor biosynthesis; ubiquinone biosynthesis [regulation]. In terms of biological role, is probably a protein kinase regulator of UbiI activity which is involved in aerobic coenzyme Q (ubiquinone) biosynthesis. The polypeptide is Probable protein kinase UbiB (Shewanella sp. (strain MR-4)).